The sequence spans 252 residues: 2-C-methyl-D-erythritol 4-phosphate cytidylyltransferase (252 aa).

The protein belongs to the IspD/TarI cytidylyltransferase family. IspD subfamily.

The enzyme catalyses 2-C-methyl-D-erythritol 4-phosphate + CTP + H(+) = 4-CDP-2-C-methyl-D-erythritol + diphosphate. It participates in isoprenoid biosynthesis; isopentenyl diphosphate biosynthesis via DXP pathway; isopentenyl diphosphate from 1-deoxy-D-xylulose 5-phosphate: step 2/6. In terms of biological role, catalyzes the formation of 4-diphosphocytidyl-2-C-methyl-D-erythritol from CTP and 2-C-methyl-D-erythritol 4-phosphate (MEP). The polypeptide is 2-C-methyl-D-erythritol 4-phosphate cytidylyltransferase (Chlorobium phaeobacteroides (strain BS1)).